Reading from the N-terminus, the 429-residue chain is Guanine nucleotide-binding protein subunit alpha (429 aa).

Gly2 carries N-myristoyl glycine lipidation. Cys3 is lipidated: S-palmitoyl cysteine. Residues 40–429 (KGVKLLLLGA…QQNLKKSGIM (390 aa)) enclose the G-alpha domain. Residues 43 to 56 (KLLLLGAGESGKST) form a G1 motif region. Glu51, Ser52, Gly53, Lys54, Ser55, and Thr56 together coordinate GTP. Position 55 (Ser55) interacts with Mg(2+). Residues 125 to 197 (LKQIDADVAG…KDSEQFTRLS (73 aa)) form a not present in other G-proteins region. The interval 249–257 (DILKGRIKT) is G2 motif. GTP-binding residues include Leu251, Thr257, Gly279, Asn345, Lys346, Asp348, and Ala401. A Mg(2+)-binding site is contributed by Thr257. The G3 motif stretch occupies residues 272–281 (FKVLDAGGQR). The segment at 341-348 (ILFLNKID) is G4 motif. Positions 399–404 (TCATDS) are G5 motif.

The protein belongs to the G-alpha family. G(q) subfamily. As to quaternary structure, g proteins are composed of 3 units; alpha, beta and gamma. The alpha chain contains the guanine nucleotide binding site. Requires Mg(2+) as cofactor.

In terms of biological role, guanine nucleotide-binding proteins (G proteins) are involved as modulators or transducers in various transmembrane signaling systems. Involved in the mating pathway. This chain is Guanine nucleotide-binding protein subunit alpha (CAG1), found in Candida albicans (strain WO-1) (Yeast).